Consider the following 196-residue polypeptide: Corrinoid adenosyltransferase (196 aa).

36-42 (GNGKGKT) contacts ATP.

This sequence belongs to the Cob(I)alamin adenosyltransferase family.

Its subcellular location is the cytoplasm. The enzyme catalyses 2 cob(II)yrinate a,c diamide + reduced [electron-transfer flavoprotein] + 2 ATP = 2 adenosylcob(III)yrinate a,c-diamide + 2 triphosphate + oxidized [electron-transfer flavoprotein] + 3 H(+). It carries out the reaction 2 cob(II)alamin + reduced [electron-transfer flavoprotein] + 2 ATP = 2 adenosylcob(III)alamin + 2 triphosphate + oxidized [electron-transfer flavoprotein] + 3 H(+). Its pathway is cofactor biosynthesis; adenosylcobalamin biosynthesis; adenosylcobalamin from cob(II)yrinate a,c-diamide: step 2/7. Required for both de novo synthesis of the corrin ring for the assimilation of exogenous corrinoids. Participates in the adenosylation of a variety of incomplete and complete corrinoids. The protein is Corrinoid adenosyltransferase (btuR) of Escherichia coli O6:H1 (strain CFT073 / ATCC 700928 / UPEC).